Reading from the N-terminus, the 936-residue chain is ABC transporter A family member 5 (936 aa).

The next 7 helical transmembrane spans lie at 34–54 (LIVI…LFDT), 340–360 (ASLI…PVML), 393–413 (FLAI…AIGL), 422–442 (SIQF…AFLV), 454–474 (VAAY…FQFL), 484–501 (WIYI…RGLY), and 527–547 (AMEE…IAAY). Residues 614 to 851 (IVCDNLKKVY…YGGSYVLTMT (238 aa)) form the ABC transporter domain. 652–659 (GPNGAGKT) contributes to the ATP binding site.

The protein belongs to the ABC transporter superfamily. ABCA family. CPR flippase (TC 3.A.1.211) subfamily.

Its subcellular location is the membrane. This Arabidopsis thaliana (Mouse-ear cress) protein is ABC transporter A family member 5 (ABCA5).